A 238-amino-acid chain; its full sequence is Modulator of macroautophagy TMEM150B (238 aa).

Residues 1 to 8 are Cytoplasmic-facing; it reads MWNYLSLL. Residues 9–29 form a helical membrane-spanning segment; the sequence is PVILFLWAIAGIWIVFAIAVV. Asparagine 30 carries N-linked (GlcNAc...) asparagine glycosylation. Residues 30–51 are Extracellular-facing; the sequence is NGSVDLNEGFPFISICGSYAPQ. Residues 52–72 form a helical membrane-spanning segment; it reads SCIFGQVLNIGAALTVWICIV. The Cytoplasmic portion of the chain corresponds to 73 to 86; sequence RHHQLRDWGVKTWQ. Residues 87 to 107 form a helical membrane-spanning segment; sequence NQLILWSGILCALGTSIVGNF. The Extracellular portion of the chain corresponds to 108–116; that stretch reads QDKNQKPTH. A helical membrane pass occupies residues 117-137; it reads LAGAFLAFILGNLYFWLQFFL. The Cytoplasmic segment spans residues 138–156; it reads SWWVKGLPQPGPHWIKSLR. Residues 157-177 traverse the membrane as a helical segment; sequence LSLCSLSTILIVAMIVLHALH. Over 178–186 the chain is Extracellular; the sequence is MRSASAICE. A helical transmembrane segment spans residues 187-207; the sequence is WVVAMLLFMLFGFFAVDFSIL. At 208 to 238 the chain is on the cytoplasmic side; that stretch reads RGCTLHLHPRLDSSLPQAPSGSPNIQMAQVL.

Belongs to the DRAM/TMEM150 family.

The protein resides in the cell membrane. It localises to the endosome membrane. Its subcellular location is the cytoplasmic vesicle. The protein localises to the autophagosome membrane. Modulator of macroautophagy that causes accumulation of autophagosomes under basal conditions and enhances autophagic flux. Represses cell death and promotes long-term clonogenic survival of cells grown in the absence of glucose in a macroautophagy-independent manner. May have some role in extracellular matrix engulfment or growth factor receptor recycling, both of which can modulate cell survival. This is Modulator of macroautophagy TMEM150B from Mus musculus (Mouse).